The primary structure comprises 953 residues: Isoleucine--tRNA ligase (953 aa).

The short motif at 58–68 (PYANGFIHLGH) is the 'HIGH' region element. Glu573 is a binding site for L-isoleucyl-5'-AMP. The 'KMSKS' region motif lies at 614–618 (KMSKS). ATP is bound at residue Lys617. Residues Cys916, Cys919, Cys936, and Cys939 each contribute to the Zn(2+) site.

This sequence belongs to the class-I aminoacyl-tRNA synthetase family. IleS type 1 subfamily. In terms of assembly, monomer. The cofactor is Zn(2+).

The protein localises to the cytoplasm. The catalysed reaction is tRNA(Ile) + L-isoleucine + ATP = L-isoleucyl-tRNA(Ile) + AMP + diphosphate. Its function is as follows. Catalyzes the attachment of isoleucine to tRNA(Ile). As IleRS can inadvertently accommodate and process structurally similar amino acids such as valine, to avoid such errors it has two additional distinct tRNA(Ile)-dependent editing activities. One activity is designated as 'pretransfer' editing and involves the hydrolysis of activated Val-AMP. The other activity is designated 'posttransfer' editing and involves deacylation of mischarged Val-tRNA(Ile). This Blochmanniella floridana protein is Isoleucine--tRNA ligase.